The primary structure comprises 417 residues: 4-hydroxy-3-methylbut-2-en-1-yl diphosphate synthase (flavodoxin) (417 aa).

4 residues coordinate [4Fe-4S] cluster: Cys304, Cys307, Cys350, and Glu357.

The protein belongs to the IspG family. The cofactor is [4Fe-4S] cluster.

It catalyses the reaction (2E)-4-hydroxy-3-methylbut-2-enyl diphosphate + oxidized [flavodoxin] + H2O + 2 H(+) = 2-C-methyl-D-erythritol 2,4-cyclic diphosphate + reduced [flavodoxin]. The protein operates within isoprenoid biosynthesis; isopentenyl diphosphate biosynthesis via DXP pathway; isopentenyl diphosphate from 1-deoxy-D-xylulose 5-phosphate: step 5/6. Converts 2C-methyl-D-erythritol 2,4-cyclodiphosphate (ME-2,4cPP) into 1-hydroxy-2-methyl-2-(E)-butenyl 4-diphosphate. The protein is 4-hydroxy-3-methylbut-2-en-1-yl diphosphate synthase (flavodoxin) of Rhizobium rhizogenes (strain K84 / ATCC BAA-868) (Agrobacterium radiobacter).